Reading from the N-terminus, the 250-residue chain is AA9 family lytic polysaccharide monooxygenase F (250 aa).

Positions 1–18 are cleaved as a signal peptide; sequence MHLKTFSNLLVFVATVAA. Cu(2+) is bound at residue His-19. Asn-24 and Asn-85 each carry an N-linked (GlcNAc...) asparagine glycan. Cystine bridges form between Cys-70/Cys-199 and Cys-169/Cys-250. His-108 is a binding site for Cu(2+). A glycan (N-linked (GlcNAc...) asparagine) is linked at Asn-146. 2 residues coordinate O2: His-185 and Gln-194. Tyr-196 contacts Cu(2+).

Belongs to the polysaccharide monooxygenase AA9 family. It depends on Cu(2+) as a cofactor.

Its subcellular location is the secreted. The enzyme catalyses [(1-&gt;4)-beta-D-glucosyl]n+m + reduced acceptor + O2 = 4-dehydro-beta-D-glucosyl-[(1-&gt;4)-beta-D-glucosyl]n-1 + [(1-&gt;4)-beta-D-glucosyl]m + acceptor + H2O.. Its function is as follows. Lytic polysaccharide monooxygenase (LPMO) that depolymerizes crystalline and amorphous polysaccharides via the oxidation of scissile alpha- or beta-(1-4)-glycosidic bonds, yielding C1 and C4 oxidation products. Catalysis by LPMOs requires the reduction of the active-site copper from Cu(II) to Cu(I) by a reducing agent and H(2)O(2) or O(2) as a cosubstrate. This chain is AA9 family lytic polysaccharide monooxygenase F, found in Botryotinia fuckeliana (strain B05.10) (Noble rot fungus).